Consider the following 159-residue polypeptide: Transcriptional repressor NrdR (159 aa).

A disordered region spans residues Met-1 to Asn-22. Residues Cys-3 to Cys-34 fold into a zinc finger. Residues Thr-11 to Asn-22 show a composition bias toward basic and acidic residues. Positions Leu-49–Asp-139 constitute an ATP-cone domain.

This sequence belongs to the NrdR family. Requires Zn(2+) as cofactor.

Negatively regulates transcription of bacterial ribonucleotide reductase nrd genes and operons by binding to NrdR-boxes. This Agrobacterium fabrum (strain C58 / ATCC 33970) (Agrobacterium tumefaciens (strain C58)) protein is Transcriptional repressor NrdR.